A 121-amino-acid polypeptide reads, in one-letter code: Large ribosomal subunit protein bL12 (121 aa).

The protein belongs to the bacterial ribosomal protein bL12 family. In terms of assembly, homodimer. Part of the ribosomal stalk of the 50S ribosomal subunit. Forms a multimeric L10(L12)X complex, where L10 forms an elongated spine to which 2 to 4 L12 dimers bind in a sequential fashion. Binds GTP-bound translation factors.

Its function is as follows. Forms part of the ribosomal stalk which helps the ribosome interact with GTP-bound translation factors. Is thus essential for accurate translation. This is Large ribosomal subunit protein bL12 from Acinetobacter baylyi (strain ATCC 33305 / BD413 / ADP1).